The sequence spans 426 residues: Glucose-1-phosphate adenylyltransferase (426 aa).

Alpha-D-glucose 1-phosphate contacts are provided by residues Y100, G165, 180–181 (EK), and S191.

The protein belongs to the bacterial/plant glucose-1-phosphate adenylyltransferase family. As to quaternary structure, homotetramer.

The enzyme catalyses alpha-D-glucose 1-phosphate + ATP + H(+) = ADP-alpha-D-glucose + diphosphate. It functions in the pathway glycan biosynthesis; glycogen biosynthesis. Its function is as follows. Involved in the biosynthesis of ADP-glucose, a building block required for the elongation reactions to produce glycogen. Catalyzes the reaction between ATP and alpha-D-glucose 1-phosphate (G1P) to produce pyrophosphate and ADP-Glc. This chain is Glucose-1-phosphate adenylyltransferase, found in Acetivibrio thermocellus (strain ATCC 27405 / DSM 1237 / JCM 9322 / NBRC 103400 / NCIMB 10682 / NRRL B-4536 / VPI 7372) (Clostridium thermocellum).